The chain runs to 341 residues: Outer membrane protein U (341 aa).

An N-terminal signal peptide occupies residues 1 to 21; that stretch reads MNKTLIALAVSAAAVATGAYA.

It belongs to the Gram-negative porin family. As to quaternary structure, homotrimer.

The protein localises to the cell outer membrane. Forms pores that allow passive diffusion of small molecules across the outer membrane. The sequence is that of Outer membrane protein U (ompU) from Vibrio cholerae serotype O1 (strain ATCC 39315 / El Tor Inaba N16961).